We begin with the raw amino-acid sequence, 303 residues long: Bifunctional protein FolD (303 aa).

NADP(+) is bound by residues 175–177 (GVS) and I243.

The protein belongs to the tetrahydrofolate dehydrogenase/cyclohydrolase family. Homodimer.

The enzyme catalyses (6R)-5,10-methylene-5,6,7,8-tetrahydrofolate + NADP(+) = (6R)-5,10-methenyltetrahydrofolate + NADPH. The catalysed reaction is (6R)-5,10-methenyltetrahydrofolate + H2O = (6R)-10-formyltetrahydrofolate + H(+). It participates in one-carbon metabolism; tetrahydrofolate interconversion. Its function is as follows. Catalyzes the oxidation of 5,10-methylenetetrahydrofolate to 5,10-methenyltetrahydrofolate and then the hydrolysis of 5,10-methenyltetrahydrofolate to 10-formyltetrahydrofolate. The chain is Bifunctional protein FolD from Xanthomonas axonopodis pv. citri (strain 306).